The sequence spans 211 residues: MAECVVHDWQGKEAGKASLELKVSKETTAVDLMHRAVLRQQAHSRQGTASTLTRAEVRGGGRKPYKQKGTGRARQGTIRTPLRPGGGIIFGPKPRTYNLAMNRKERRLALRTALMARLEDVIVVKDFGDSLKAPKTREISDALVRLGVAADAKVLIILSTPSEIIRRSVRNLEKVKLIAADQLNVFDLLHANSLVLSEEALAKIQEVYGDD.

The segment covering 41-53 (QAHSRQGTASTLT) has biased composition (polar residues). The disordered stretch occupies residues 41–78 (QAHSRQGTASTLTRAEVRGGGRKPYKQKGTGRARQGTI). Positions 60-71 (GGRKPYKQKGTG) are enriched in basic residues.

Belongs to the universal ribosomal protein uL4 family. Part of the 50S ribosomal subunit.

Functionally, one of the primary rRNA binding proteins, this protein initially binds near the 5'-end of the 23S rRNA. It is important during the early stages of 50S assembly. It makes multiple contacts with different domains of the 23S rRNA in the assembled 50S subunit and ribosome. In terms of biological role, forms part of the polypeptide exit tunnel. The polypeptide is Large ribosomal subunit protein uL4 (Prochlorococcus marinus (strain MIT 9303)).